The sequence spans 210 residues: Small ribosomal subunit protein uS7 (210 aa).

The protein belongs to the universal ribosomal protein uS7 family. Component of the small ribosomal subunit. Part of the small subunit (SSU) processome, composed of more than 70 proteins and the RNA chaperone small nucleolar RNA (snoRNA) U3.

The protein resides in the cytoplasm. It localises to the nucleus. Its subcellular location is the nucleolus. Functionally, component of the small ribosomal subunit. The ribosome is a large ribonucleoprotein complex responsible for the synthesis of proteins in the cell. Part of the small subunit (SSU) processome, first precursor of the small eukaryotic ribosomal subunit. During the assembly of the SSU processome in the nucleolus, many ribosome biogenesis factors, an RNA chaperone and ribosomal proteins associate with the nascent pre-rRNA and work in concert to generate RNA folding, modifications, rearrangements and cleavage as well as targeted degradation of pre-ribosomal RNA by the RNA exosome. The chain is Small ribosomal subunit protein uS7 (rps-5) from Caenorhabditis elegans.